The chain runs to 154 residues: Ubiquitin-conjugating enzyme E2 L3 (154 aa).

A UBC core domain is found at 2-149; sequence AASRRLMKEL…AEEFTKKYGE (148 aa). The active-site Glycyl thioester intermediate is C86. K131 is modified (N6-acetyllysine).

The protein belongs to the ubiquitin-conjugating enzyme family. In terms of assembly, interacts with PRKN; involved in ubiquitination and degradation of misfolded proteins. Interacts with UBE3A. Interacts with CCNB1IP1, CBL, ZAP70, RNF19A, RNF19B and RNF144B. Interacts with ARIH1. Interacts with ARIH2 (via RING-type 1). Interacts with NCOA1; they functionally interact to regulate progesterone receptor transcriptional activity. Interacts with NDFIP1 (via N-terminus); the interaction mediates recruitment of UBE2L3 to ITCH and causes MAP3K7 ubiquitination. Post-translationally, ubiquitinated. The alteration of UBE2L3 protein levels during the S-phase of the cell cycle is due to ubiquitin-dependent proteasomal degradation. Autoubiquitinated in vitro.

It localises to the nucleus. The protein localises to the cytoplasm. It carries out the reaction S-ubiquitinyl-[E1 ubiquitin-activating enzyme]-L-cysteine + [E2 ubiquitin-conjugating enzyme]-L-cysteine = [E1 ubiquitin-activating enzyme]-L-cysteine + S-ubiquitinyl-[E2 ubiquitin-conjugating enzyme]-L-cysteine.. The protein operates within protein modification; protein ubiquitination. Ubiquitin-conjugating enzyme E2 that specifically acts with HECT-type and RBR family E3 ubiquitin-protein ligases. Does not function with most RING-containing E3 ubiquitin-protein ligases because it lacks intrinsic E3-independent reactivity with lysine: in contrast, it has activity with the RBR family E3 enzymes, such as PRKN, RNF31 and ARIH1, that function like RING-HECT hybrids. Accepts ubiquitin from the E1 complex and catalyzes its covalent attachment to other proteins. Mediates ubiquitination by the CUL9-RBX1 complex. In vitro catalyzes 'Lys-11'-linked polyubiquitination. Involved in the selective degradation of short-lived and abnormal proteins. Down-regulated during the S-phase it is involved in progression through the cell cycle. Regulates nuclear hormone receptors transcriptional activity. May play a role in myelopoiesis. In Bos taurus (Bovine), this protein is Ubiquitin-conjugating enzyme E2 L3 (UBE2L3).